The chain runs to 325 residues: Dimethylallyltranstransferase (325 aa).

The isopentenyl diphosphate site is built by Arg-54 and His-84. Residues Asp-91 and Asp-95 each coordinate Mg(2+). The DDXXD motif signature appears at 91–95 (DRVVD). Arg-101 is an isopentenyl diphosphate binding site. The short motif at 217–221 (RDIIA) is the DDXXD motif element.

The protein belongs to the FPP/GGPP synthase family. It depends on Mg(2+) as a cofactor.

It carries out the reaction isopentenyl diphosphate + dimethylallyl diphosphate = (2E)-geranyl diphosphate + diphosphate. It functions in the pathway isoprenoid biosynthesis; geranyl diphosphate biosynthesis; geranyl diphosphate from dimethylallyl diphosphate and isopentenyl diphosphate: step 1/1. In terms of biological role, catalyzes the addition of isopentenyl diphosphate (IPP) onto dimethylallyl diphosphate (DMAPP) to form geranyl pyrophosphate (GPP). Is probably involved in the biosynthesis of decaprenyl diphosphate, which is required for mycobacterial cell wall synthesis. Could be required for host endothelial-cell invasion and/or intracellular survival. The chain is Dimethylallyltranstransferase from Mycobacterium tuberculosis (strain ATCC 25618 / H37Rv).